Reading from the N-terminus, the 445-residue chain is Phosphoglucosamine mutase (445 aa).

S103 functions as the Phosphoserine intermediate in the catalytic mechanism. Positions 103, 240, 242, and 244 each coordinate Mg(2+). Phosphoserine is present on S103.

Belongs to the phosphohexose mutase family. Mg(2+) serves as cofactor. In terms of processing, activated by phosphorylation.

It catalyses the reaction alpha-D-glucosamine 1-phosphate = D-glucosamine 6-phosphate. Its function is as follows. Catalyzes the conversion of glucosamine-6-phosphate to glucosamine-1-phosphate. The polypeptide is Phosphoglucosamine mutase (Cellvibrio japonicus (strain Ueda107) (Pseudomonas fluorescens subsp. cellulosa)).